Here is a 649-residue protein sequence, read N- to C-terminus: 1-deoxy-D-xylulose-5-phosphate synthase (649 aa).

Thiamine diphosphate-binding positions include histidine 84 and 125 to 127; that span reads GHS. Aspartate 156 contacts Mg(2+). Residues 157–158, asparagine 185, phenylalanine 292, and glutamate 385 each bind thiamine diphosphate; that span reads GS. Residue asparagine 185 participates in Mg(2+) binding.

The protein belongs to the transketolase family. DXPS subfamily. As to quaternary structure, homodimer. It depends on Mg(2+) as a cofactor. Thiamine diphosphate is required as a cofactor.

The catalysed reaction is D-glyceraldehyde 3-phosphate + pyruvate + H(+) = 1-deoxy-D-xylulose 5-phosphate + CO2. It participates in metabolic intermediate biosynthesis; 1-deoxy-D-xylulose 5-phosphate biosynthesis; 1-deoxy-D-xylulose 5-phosphate from D-glyceraldehyde 3-phosphate and pyruvate: step 1/1. In terms of biological role, catalyzes the acyloin condensation reaction between C atoms 2 and 3 of pyruvate and glyceraldehyde 3-phosphate to yield 1-deoxy-D-xylulose-5-phosphate (DXP). This Saccharophagus degradans (strain 2-40 / ATCC 43961 / DSM 17024) protein is 1-deoxy-D-xylulose-5-phosphate synthase.